Reading from the N-terminus, the 245-residue chain is 7-cyano-7-deazaguanine synthase 2 (245 aa).

Position 12–22 (12–22 (FSGGQDSTTCL)) interacts with ATP. The Zn(2+) site is built by Cys200, Cys215, Cys218, and Cys221.

The protein belongs to the QueC family. Zn(2+) is required as a cofactor.

The catalysed reaction is 7-carboxy-7-deazaguanine + NH4(+) + ATP = 7-cyano-7-deazaguanine + ADP + phosphate + H2O + H(+). It participates in purine metabolism; 7-cyano-7-deazaguanine biosynthesis. Its function is as follows. Catalyzes the ATP-dependent conversion of 7-carboxy-7-deazaguanine (CDG) to 7-cyano-7-deazaguanine (preQ(0)). This is 7-cyano-7-deazaguanine synthase 2 from Mesorhizobium japonicum (strain LMG 29417 / CECT 9101 / MAFF 303099) (Mesorhizobium loti (strain MAFF 303099)).